A 315-amino-acid polypeptide reads, in one-letter code: Probable cell division protein kinase ECU11_1290 (315 aa).

Residues 13–294 form the Protein kinase domain; that stretch reads YEKVCRISSG…ASQGLCSGFV (282 aa). Residues 19-27 and Lys-42 each bind ATP; that span reads ISSGSFGNV. Asp-138 acts as the Proton acceptor in catalysis.

The protein belongs to the protein kinase superfamily. CMGC Ser/Thr protein kinase family. CDC2/CDKX subfamily.

It is found in the nucleus. The enzyme catalyses L-seryl-[protein] + ATP = O-phospho-L-seryl-[protein] + ADP + H(+). It catalyses the reaction L-threonyl-[protein] + ATP = O-phospho-L-threonyl-[protein] + ADP + H(+). Functionally, may play a role in the control of the eukaryotic cell cycle. The chain is Probable cell division protein kinase ECU11_1290 from Encephalitozoon cuniculi (strain GB-M1) (Microsporidian parasite).